Reading from the N-terminus, the 501-residue chain is Glutamate--tRNA ligase (501 aa).

A 'HIGH' region motif is present at residues 10 to 20 (PSPTGSLHIGG). The 'KMSKS' region signature appears at 251-255 (KLSKR). Lys-254 contacts ATP.

It belongs to the class-I aminoacyl-tRNA synthetase family. Glutamate--tRNA ligase type 1 subfamily. As to quaternary structure, monomer.

The protein resides in the cytoplasm. The enzyme catalyses tRNA(Glu) + L-glutamate + ATP = L-glutamyl-tRNA(Glu) + AMP + diphosphate. Catalyzes the attachment of glutamate to tRNA(Glu) in a two-step reaction: glutamate is first activated by ATP to form Glu-AMP and then transferred to the acceptor end of tRNA(Glu). The protein is Glutamate--tRNA ligase of Desulforudis audaxviator (strain MP104C).